Reading from the N-terminus, the 214-residue chain is Ras-related protein RABA2b (214 aa).

19-26 (GDSGVGKS) serves as a coordination point for GTP. The short motif at 41-49 (SKSTIGVEF) is the Effector region element. GTP is bound by residues 67–71 (DTAGQ), 125–128 (NKSD), and 155–156 (SA). S-geranylgeranyl cysteine attachment occurs at residues Cys211 and Cys212.

The protein belongs to the small GTPase superfamily. Rab family. As to expression, expressed in root tips.

It localises to the endosome membrane. The protein localises to the golgi apparatus. The protein resides in the trans-Golgi network membrane. Functionally, intracellular vesicle trafficking and protein transport. This chain is Ras-related protein RABA2b (RABA2B), found in Arabidopsis thaliana (Mouse-ear cress).